A 741-amino-acid chain; its full sequence is Cysteine--tRNA ligase, cytoplasmic (741 aa).

Cysteine 46 provides a ligand contact to Zn(2+). Positions 48–58 (PTVYDASHMGH) match the 'HIGH' region motif. Serine 297 is subject to Phosphoserine. Zn(2+)-binding residues include cysteine 340, histidine 365, and glutamate 369. Residues 398–402 (KMSKS) carry the 'KMSKS' region motif. Lysine 401 provides a ligand contact to ATP.

This sequence belongs to the class-I aminoacyl-tRNA synthetase family. The cofactor is Zn(2+).

It is found in the cytoplasm. The enzyme catalyses tRNA(Cys) + L-cysteine + ATP = L-cysteinyl-tRNA(Cys) + AMP + diphosphate. The sequence is that of Cysteine--tRNA ligase, cytoplasmic (Aats-cys) from Drosophila pseudoobscura pseudoobscura (Fruit fly).